Here is a 139-residue protein sequence, read N- to C-terminus: Holo-[acyl-carrier-protein] synthase (139 aa).

Mg(2+)-binding residues include Asp8 and Glu61.

Belongs to the P-Pant transferase superfamily. AcpS family. Mg(2+) is required as a cofactor.

Its subcellular location is the cytoplasm. It carries out the reaction apo-[ACP] + CoA = holo-[ACP] + adenosine 3',5'-bisphosphate + H(+). In terms of biological role, transfers the 4'-phosphopantetheine moiety from coenzyme A to a Ser of acyl-carrier-protein. The sequence is that of Holo-[acyl-carrier-protein] synthase from Rhodopseudomonas palustris (strain BisB5).